Consider the following 203-residue polypeptide: Ras-related protein Rab-30 (203 aa).

The GTP site is built by V20, G21, K22, T23, C24, and T41. Residue T23 coordinates Mg(2+). The switch-I stretch occupies residues 36-44 (PGQGATIGV). 2 residues coordinate Mg(2+): T41 and D64. Positions 67, 122, 123, 125, 153, and 154 each coordinate GTP. A switch-II region spans residues 67–83 (GQERFRSITQSYYRSAN). 2 S-geranylgeranyl cysteine lipidation sites follow: C199 and C200. C200 carries the post-translational modification Cysteine methyl ester. The propeptide at 201 to 203 (NFN) is removed in mature form.

The protein belongs to the small GTPase superfamily. Rab family. Mg(2+) serves as cofactor.

The protein resides in the membrane. Its subcellular location is the golgi apparatus. The protein localises to the trans-Golgi network membrane. It is found in the cis-Golgi network membrane. It localises to the golgi apparatus membrane. The protein resides in the cytoplasm. Its subcellular location is the cytoplasmic vesicle. The protein localises to the autophagosome membrane. It is found in the autolysosome membrane. The catalysed reaction is GTP + H2O = GDP + phosphate + H(+). Its activity is regulated as follows. Regulated by guanine nucleotide exchange factors (GEFs) which promote the exchange of bound GDP for free GTP. Regulated by GTPase activating proteins (GAPs) which increase the GTP hydrolysis activity. Inhibited by GDP dissociation inhibitors (GDIs). In terms of biological role, the small GTPases Rab are key regulators of intracellular membrane trafficking, from the formation of transport vesicles to their fusion with membranes. Rabs cycle between an inactive GDP-bound form and an active GTP-bound form that is able to recruit to membranes different sets of downstream effectors directly responsible for vesicle formation, movement, tethering and fusion. RAB30 is required for maintaining the structural integrity of the Golgi apparatus, possibly by mediating interactions with cytoplasmic scaffolding proteins. Facilitates lipid homeostasis during fasting by regulating hepatic protein and lipid trafficking in a PPAR-alpha-dependent manner. Promotes autophagosome biogenesis during bacterial infection such as group A Streptococcus infection. This is Ras-related protein Rab-30 (RAB30) from Bos taurus (Bovine).